Consider the following 438-residue polypeptide: Putative truncated GMC-type inactive oxidoreductase L894 (438 aa).

Positions 1-26 are cleaved as a signal peptide; it reads MYVFLLFSRYKIFYVYIKKMAHRSRC. 79–109 contributes to the FAD binding site; sequence DIVIIGAGAAGCVLAYYLTKFSDLKIILLEA.

Belongs to the GMC oxidoreductase family. FAD serves as cofactor.

The protein resides in the virion. The chain is Putative truncated GMC-type inactive oxidoreductase L894 from Acanthamoeba polyphaga (Amoeba).